The chain runs to 263 residues: Lens fiber major intrinsic protein (263 aa).

The Cytoplasmic segment spans residues 1 to 9 (MWELRSASF). Residues 10 to 29 (WRAIFAEFFATLFYVFFGLG) traverse the membrane as a helical segment. Residues 30–41 (ASLRWTPGPLHV) are Extracellular-facing. The helical transmembrane segment at 42-59 (LQVALAFGLALATLVQAV) threads the bilayer. At 60 to 61 (GH) the chain is on the cytoplasmic side. The discontinuously helical intramembrane region spans 62–77 (ISGAHVNPAVTFAFLV). The NPA 1 signature appears at 68-70 (NPA). The Cytoplasmic portion of the chain corresponds to 78–82 (GSQMS). The helical transmembrane segment at 83–106 (LLRAFCYMAAQLLGAVAGAAVLYS) threads the bilayer. Over 107 to 127 (VTPPAVRGNLALNTLHPGVSV) the chain is Extracellular. Residues 128-148 (GQATTVEIFLTLQFVLCIFAT) traverse the membrane as a helical segment. Over 149 to 156 (YDERRNGR) the chain is Cytoplasmic. The helical transmembrane segment at 157–175 (LGSVALAVGFSLTLGHLFG) threads the bilayer. The Extracellular portion of the chain corresponds to 176–178 (MYY). The segment at residues 179–193 (TGAGMNPARSFAPAI) is an intramembrane region (discontinuously helical). Residues 184–186 (NPA) carry the NPA 2 motif. The Extracellular portion of the chain corresponds to 194 to 200 (LTRNFTN). A helical membrane pass occupies residues 201 to 222 (HWVYWVGPIIGGGLGSLLYDFL). Over 223–263 (LFPRLKSVSERLSILKGARPSDSNGQPEGTGEPVELKTQAL) the chain is Cytoplasmic. The interval 227–237 (LKSVSERLSIL) is interaction with CALM. Ser235, Ser243, and Ser245 each carry phosphoserine. Positions 240 to 263 (ARPSDSNGQPEGTGEPVELKTQAL) are disordered. Position 246 is a deamidated asparagine (Asn246).

The protein belongs to the MIP/aquaporin (TC 1.A.8) family. As to quaternary structure, homotetramer; each monomer provides an independent water pore. Two homotetramers on opposing membranes can dimerize, forming a cell-cell junction. Interacts with CALM; the calcium-calmodulin/CALM complex interacts with the cytoplasmic domains of two aquaporins, leading to channel closure. Interacts with BFSP1 (via C-terminus); prevents calcium-dependent inhibition of the water channel activity. Subject to partial proteolytic cleavage in the eye lens core. Partial proteolysis promotes interactions between tetramers from adjoining membranes. Post-translationally, fatty acylated at Met-1 and Lys-238. The acyl modifications, in decreasing order of ion abundance, are: oleoyl (C18:1) &gt; palmitoyl (C16:0) &gt; stearoyl (C18:0) &gt; eicosenoyl (C20:1) &gt; dihomo-gamma-linolenoyl (C20:3) &gt; palmitoleoyl (C16:1) &gt; eicosadienoyl (C20:2).

The protein resides in the cell membrane. The protein localises to the cell junction. The catalysed reaction is H2O(in) = H2O(out). With respect to regulation, the water channel activity is inhibited by calcium through calmodulin/CALM. Functionally, aquaporins form homotetrameric transmembrane channels, with each monomer independently mediating water transport across the plasma membrane along its osmotic gradient. Specifically expressed in lens fiber cells, this aquaporin is crucial for maintaining lens water homeostasis and transparency. Beyond water permeability, it also acts as a cell-to-cell adhesion molecule, forming thin junctions between lens fiber cells that are essential for maintaining the ordered structure and transparency of the lens. In Canis lupus familiaris (Dog), this protein is Lens fiber major intrinsic protein.